Consider the following 248-residue polypeptide: ATP synthase subunit a, chloroplastic (248 aa).

A run of 5 helical transmembrane segments spans residues 38–58 (QVLI…TIVV), 96–116 (VPFI…GALL), 135–155 (INTT…AGIS), 200–220 (LVVV…VMFL), and 221–241 (GLFT…AYIG).

The protein belongs to the ATPase A chain family. F-type ATPases have 2 components, CF(1) - the catalytic core - and CF(0) - the membrane proton channel. CF(1) has five subunits: alpha(3), beta(3), gamma(1), delta(1), epsilon(1). CF(0) has four main subunits: a, b, b' and c.

The protein localises to the plastid. The protein resides in the chloroplast thylakoid membrane. In terms of biological role, key component of the proton channel; it plays a direct role in the translocation of protons across the membrane. This is ATP synthase subunit a, chloroplastic from Amborella trichopoda.